The chain runs to 111 residues: Ribosome-binding factor A (111 aa).

This sequence belongs to the RbfA family. In terms of assembly, monomer. Binds 30S ribosomal subunits, but not 50S ribosomal subunits or 70S ribosomes.

It is found in the cytoplasm. In terms of biological role, one of several proteins that assist in the late maturation steps of the functional core of the 30S ribosomal subunit. Associates with free 30S ribosomal subunits (but not with 30S subunits that are part of 70S ribosomes or polysomes). Required for efficient processing of 16S rRNA. May interact with the 5'-terminal helix region of 16S rRNA. This chain is Ribosome-binding factor A, found in Helicobacter pylori (strain HPAG1).